A 57-amino-acid chain; its full sequence is UPF0057 membrane protein T23F2.3 (57 aa).

2 helical membrane passes run 4–24 and 36–56; these read TCTD…GVFL and ILLT…VILA.

It belongs to the UPF0057 (PMP3) family.

It localises to the membrane. This chain is UPF0057 membrane protein T23F2.3, found in Caenorhabditis elegans.